The chain runs to 287 residues: MNPDNIRELRDRTGLGLSDCKKALEECSGDIKEAIGKLRAIGLAKADKKIDRVASDGLIAMHLAESCGVLIELNCETDFVARNEKFIELISNLASIAYQERCTSIDKLKNAKYEGVGTVQEAIMNGTSVLGEKLELSRLCYLEAKDGVIAGYVHGDVRGLGKTGALVALRSSGDKSKLQEVGKQIAMHVVAMKPEALSIDNLDQTKMNNERSIIEEQVKGLNKSEEVTKKIVDGRMAKYYEEVILLEQKFIKDDKMKISDFMRLSESSVNSPVELSDYKLLVLGSKN.

Positions 77-80 (TDFV) are involved in Mg(2+) ion dislocation from EF-Tu.

Belongs to the EF-Ts family.

The protein localises to the cytoplasm. In terms of biological role, associates with the EF-Tu.GDP complex and induces the exchange of GDP to GTP. It remains bound to the aminoacyl-tRNA.EF-Tu.GTP complex up to the GTP hydrolysis stage on the ribosome. This is Elongation factor Ts from Wolbachia sp. subsp. Brugia malayi (strain TRS).